The sequence spans 241 residues: UDP-2,3-diacylglucosamine hydrolase (241 aa).

Residues D8, H10, D41, N79, and H114 each coordinate Mn(2+). Position 79 to 80 (79 to 80 (NR)) interacts with substrate. Positions 122, 160, 167, and 195 each coordinate substrate. Residues H195 and H197 each contribute to the Mn(2+) site.

The protein belongs to the LpxH family. Requires Mn(2+) as cofactor.

The protein localises to the cell inner membrane. The enzyme catalyses UDP-2-N,3-O-bis[(3R)-3-hydroxytetradecanoyl]-alpha-D-glucosamine + H2O = 2-N,3-O-bis[(3R)-3-hydroxytetradecanoyl]-alpha-D-glucosaminyl 1-phosphate + UMP + 2 H(+). The protein operates within glycolipid biosynthesis; lipid IV(A) biosynthesis; lipid IV(A) from (3R)-3-hydroxytetradecanoyl-[acyl-carrier-protein] and UDP-N-acetyl-alpha-D-glucosamine: step 4/6. Its function is as follows. Hydrolyzes the pyrophosphate bond of UDP-2,3-diacylglucosamine to yield 2,3-diacylglucosamine 1-phosphate (lipid X) and UMP by catalyzing the attack of water at the alpha-P atom. Involved in the biosynthesis of lipid A, a phosphorylated glycolipid that anchors the lipopolysaccharide to the outer membrane of the cell. The chain is UDP-2,3-diacylglucosamine hydrolase from Azotobacter vinelandii (strain DJ / ATCC BAA-1303).